A 366-amino-acid polypeptide reads, in one-letter code: C-X-C chemokine receptor type 3 (366 aa).

Residues 1 to 55 are Extracellular-facing; that stretch reads MVPEMSERQEFQASEFAYLLENSSYDYGENETYFCCTSPPCPQDFSLNFDRTFLP. Asn-22 is a glycosylation site (N-linked (GlcNAc...) asparagine). Sulfotyrosine is present on residues Tyr-25 and Tyr-27. Asn-30 carries an N-linked (GlcNAc...) asparagine glycan. The chain crosses the membrane as a helical span at residues 56-76; that stretch reads VLYSLLFVLGLLGNGVVAVVL. At 77 to 88 the chain is on the cytoplasmic side; the sequence is LSQRAALSSTDT. A helical transmembrane segment spans residues 89-109; it reads FLLHLAVADALLVLTLPLWAV. At 110 to 124 the chain is on the extracellular side; that stretch reads DAAIQWVFGSGLCKV. A disulfide bond links Cys-122 and Cys-201. The helical transmembrane segment at 125–145 threads the bilayer; the sequence is AGALFNINFYAGALLLACISF. Topologically, residues 146–167 are cytoplasmic; sequence DRYLSIVHATQFYRRGPPARVA. The chain crosses the membrane as a helical span at residues 168–188; the sequence is LTCVAVWGLCLLFALPDFIFL. Topologically, residues 189-221 are extracellular; that stretch reads SSHHDNRLNATHCQYNFPQEGRTALRVLQLVAG. N-linked (GlcNAc...) asparagine glycosylation occurs at Asn-197. The chain crosses the membrane as a helical span at residues 222-242; sequence FLLPLLVMAYCYARILTVLLV. Residues 243–254 lie on the Cytoplasmic side of the membrane; sequence SRGQRRLRAMRL. Residues 255–275 form a helical membrane-spanning segment; sequence VVVVVVAFALCWTPYHLVVLV. At 276 to 299 the chain is on the extracellular side; that stretch reads DTLMDLGALARNCGRESRVDVAKS. The chain crosses the membrane as a helical span at residues 300 to 320; the sequence is VTSGMGYMHCCLNPLLYAFVG. Residues 321-366 are Cytoplasmic-facing; the sequence is VKFRERMWVLLMRLGCPDQRGHQRQPSASRRDSSWSETTEASYSGL. Residues 339 to 366 form a disordered region; sequence QRGHQRQPSASRRDSSWSETTEASYSGL. A compositionally biased stretch (polar residues) spans 355–366; it reads WSETTEASYSGL.

The protein belongs to the G-protein coupled receptor 1 family. In terms of assembly, homomer. Forms heteromers with ACKR4. Interacts with PF4/CXCL4. Post-translationally, sulfation on Tyr-25 and Tyr-27 is essential for CXCL10 binding. In terms of processing, N-glycosylated.

Its subcellular location is the cell membrane. Receptor for the C-X-C chemokine CXCL9, CXCL10 and CXCL11 and mediates the proliferation, survival and angiogenic activity of mesangial cells through a heterotrimeric G-protein signaling pathway. Probably promotes cell chemotaxis response. Binds to CCL21. Upon activation by PF4, induces activated T-lymphocytes migration mediated via downstream Ras/extracellular signal-regulated kinase (ERK) signaling. The sequence is that of C-X-C chemokine receptor type 3 (CXCR3) from Capra hircus (Goat).